Consider the following 272-residue polypeptide: Phosphate import ATP-binding protein PstB 1 (272 aa).

Residues 26–267 form the ABC transporter domain; sequence LEIRNLDLRY…PKKRKTEDYI (242 aa). 58 to 65 is an ATP binding site; that stretch reads GPSGCGKS.

This sequence belongs to the ABC transporter superfamily. Phosphate importer (TC 3.A.1.7) family. As to quaternary structure, the complex is composed of two ATP-binding proteins (PstB), two transmembrane proteins (PstC and PstA) and a solute-binding protein (PstS).

The protein localises to the cell inner membrane. It catalyses the reaction phosphate(out) + ATP + H2O = ADP + 2 phosphate(in) + H(+). Functionally, part of the ABC transporter complex PstSACB involved in phosphate import. Responsible for energy coupling to the transport system. In Shewanella oneidensis (strain ATCC 700550 / JCM 31522 / CIP 106686 / LMG 19005 / NCIMB 14063 / MR-1), this protein is Phosphate import ATP-binding protein PstB 1.